A 778-amino-acid chain; its full sequence is Double zinc ribbon and ankyrin repeat-containing protein 1 (778 aa).

Phosphoserine occurs at positions 179 and 201. DZANK-type zinc fingers lie at residues 230-289 (CAHC…CVVC) and 359-407 (CSRC…GSCG). ANK repeat units lie at residues 631 to 662 (ENKL…DPNC) and 666 to 695 (QGRP…DIDQ). Position 768 is a phosphoserine (Ser-768).

Interacts with NINL. Associates with DYNC1H1 and multiple dynein intermediate and light chains as well as actin-binding proteins.

It localises to the cytoplasm. Its subcellular location is the cytoskeleton. It is found in the microtubule organizing center. The protein localises to the centrosome. The protein resides in the cilium basal body. Functionally, involved in vesicle transport in photoreceptor cells. The sequence is that of Double zinc ribbon and ankyrin repeat-containing protein 1 (Dzank1) from Mus musculus (Mouse).